The primary structure comprises 311 residues: Deacetoxycephalosporin C synthase (311 aa).

One can recognise a Fe2OG dioxygenase domain in the interval 154 to 267; the sequence is DCEPLLRFRY…RTSSVFFLRP (114 aa).

It belongs to the iron/ascorbate-dependent oxidoreductase family. It depends on Fe cation as a cofactor. Requires L-ascorbate as cofactor.

The catalysed reaction is penicillin N + 2-oxoglutarate + O2 = deacetoxycephalosporin C + succinate + CO2 + H2O. It participates in antibiotic biosynthesis; cephalosporin C biosynthesis. In terms of biological role, catalyzes the step from penicillin N to deacetoxy-cephalosporin C. This Streptomyces clavuligerus protein is Deacetoxycephalosporin C synthase (cefE).